Here is a 466-residue protein sequence, read N- to C-terminus: Hydroxyacid-oxoacid transhydrogenase, mitochondrial (466 aa).

An N6-acetyllysine modification is found at Lys444. Ser451 carries the post-translational modification Phosphoserine.

This sequence belongs to the iron-containing alcohol dehydrogenase family. Hydroxyacid-oxoacid transhydrogenase subfamily.

It is found in the mitochondrion. It carries out the reaction (S)-3-hydroxybutanoate + 2-oxoglutarate = (R)-2-hydroxyglutarate + acetoacetate. It catalyses the reaction 4-hydroxybutanoate + 2-oxoglutarate = (R)-2-hydroxyglutarate + succinate semialdehyde. Functionally, catalyzes the cofactor-independent reversible oxidation of gamma-hydroxybutyrate (GHB) to succinic semialdehyde (SSA) coupled to reduction of 2-ketoglutarate (2-KG) to D-2-hydroxyglutarate (D-2-HG). L-3-hydroxybutyrate (L-3-OHB) is also a substrate for HOT when using 2-KG as hydrogen acceptor, resulting in the formation of D-2-HG. This Bos taurus (Bovine) protein is Hydroxyacid-oxoacid transhydrogenase, mitochondrial (ADHFE1).